The sequence spans 582 residues: Leucine-rich repeat transmembrane neuronal protein 3 (582 aa).

An N-terminal signal peptide occupies residues 1–30; sequence MGFNVIRLLRGSAVAVVLAPTVLLTMLSSA. The LRRNT domain occupies 31 to 61; sequence ERGCPKGCRCEGKMVYCESQKLQEIPSSISA. The Extracellular portion of the chain corresponds to 31 to 420; it reads ERGCPKGCRC…VDTEHISFHK (390 aa). LRR repeat units follow at residues 63 to 83, 86 to 107, 110 to 131, 134 to 155, 158 to 179, 182 to 203, 206 to 226, 230 to 251, 254 to 275, and 279 to 300; these read CLGLSLRYNSLQKLKYNQFKG, QLTWLYLDHNHISNIDENAFNG, RLKELILSSNRISYFLNNTFRP, NLRNLDLSYNQLHSLGSEQFRG, KLLSLHLRSNSLRTIPVRIFQD, NLELLDLGYNRIRSLARNVFAG, RLKELHLEHNQFSKLNLALFP, SLQNLYMQWNKISVIGQTMSWT, SLQRLDLSGNEIEAFSGPSVFQ, and NLQRLNLDSNKLTFIGQEILDS. N-linked (GlcNAc...) asparagine glycosylation is present at Asn-126. The LRRCT domain occupies 312–363; sequence NIWECSRNICSLVNWLRSFKGLRENTIICASPKELQGVNVIDAVKNYSICGK. The N-linked (GlcNAc...) asparagine glycan is linked to Asn-357. The tract at residues 378–410 is disordered; the sequence is KPTFKPKLPRPKHESKPPLPPTVGATEPSPETD. The helical transmembrane segment at 421 to 441 threads the bilayer; it reads IIAGSVALFLSVLVILLVMYV. At 442–582 the chain is on the cytoplasmic side; that stretch reads SWKRYPASMK…RISDHKPQLA (141 aa).

It belongs to the LRRTM family. In terms of tissue distribution, expressed in neuronal tissues.

The protein resides in the cell membrane. It localises to the postsynaptic cell membrane. Its function is as follows. May play a role in the development and maintenance of the vertebrate nervous system. Exhibits a limited synaptogenic activity in vitro, restricted to excitatory presynaptic differentiation. The sequence is that of Leucine-rich repeat transmembrane neuronal protein 3 (Lrrtm3) from Mus musculus (Mouse).